The primary structure comprises 176 residues: Membrane glycoprotein UL144 (176 aa).

Positions 1-20 (MKPLIMLICFAVILLQLGVT) are cleaved as a signal peptide. 2 TNFR-Cys repeats span residues 22–56 (VCQHNEVQLGNECCPPCGSGQRVTKVCTDYTSVTC) and 58–95 (PCPNGTYVSGLYNCTDCTQCNVTQVMIRNCTSTNNTVC). Cystine bridges form between cysteine 23–cysteine 34, cysteine 35–cysteine 48, cysteine 38–cysteine 56, cysteine 59–cysteine 71, cysteine 74–cysteine 87, and cysteine 77–cysteine 95. A helical membrane pass occupies residues 134-154 (LAWLSLFIFLVGIILLILYLI).

Interacts with host TRIM23; this interaction causes auto-ubiquitination of TRAF6, leading to NF-kappaB activation.

Its subcellular location is the membrane. Its function is as follows. Activates NF-kappaB in a tumor necrosis factor receptor (TNFR)-associated factor 6 (TRAF6)-dependent manner, causing the up-regulation of the chemokine CCL22. This is Membrane glycoprotein UL144 (UL144) from Homo sapiens (Human).